Consider the following 447-residue polypeptide: MKKTHINVIGAGLAGSEAAYQIAKRGIPVKLYEMRGVKQTPQHKTDKFAELVCSNSLRGAAITNAVGLLKEEMRRLDSVIIKAAEVTQVPAGGALAVDREGFSDFVTREVSNHPLVEVIREEITDLPEDEITIIATGPLTSDKLAEKIHEFNGADGFYFYDAAAPIIDANSINFDKVYKKSRYDKGEADYINCPMTKEEFQAFQEALISAEEAPLNSFEDLKVFEGCMPIEEMAKRGYKTMLFGPMKPVGLEYPEDYKGPRDGDFKTPYAVVQLRQDNASASLYNIVGFQTHLKWGEQKRVFQMIPGLENAEFVRYGVMHRNSYMDSPNLLKQTFQSRKQENLFFAGQMTGVEGYVESAASGLVAGINAVKLFNDEEVVIFPKTTAIGSLPYYITHTDSKHFQPMNVTFGIVEELEGPRIRDKKERYTKVAERALNSLTDIISKDNL.

FAD is bound at residue 10-15 (GAGLAG).

The protein belongs to the MnmG family. TrmFO subfamily. It depends on FAD as a cofactor.

Its subcellular location is the cytoplasm. It carries out the reaction uridine(54) in tRNA + (6R)-5,10-methylene-5,6,7,8-tetrahydrofolate + NADH + H(+) = 5-methyluridine(54) in tRNA + (6S)-5,6,7,8-tetrahydrofolate + NAD(+). It catalyses the reaction uridine(54) in tRNA + (6R)-5,10-methylene-5,6,7,8-tetrahydrofolate + NADPH + H(+) = 5-methyluridine(54) in tRNA + (6S)-5,6,7,8-tetrahydrofolate + NADP(+). Its function is as follows. Catalyzes the folate-dependent formation of 5-methyl-uridine at position 54 (M-5-U54) in all tRNAs. In Lactococcus lactis subsp. lactis (strain IL1403) (Streptococcus lactis), this protein is Methylenetetrahydrofolate--tRNA-(uracil-5-)-methyltransferase TrmFO.